The sequence spans 50 residues: F420-non-reducing hydrogenase vhu subunit U (50 aa).

Ni(2+) contacts are provided by selenocysteine 27 and cysteine 30. Selenocysteine 27 is a non-standard amino acid (selenocysteine). The propeptide at 34–50 is removed in mature form; sequence IIVKDEKGNKIIEVIKE.

The protein belongs to the [NiFe]/[NiFeSe] hydrogenase large subunit family. The F420-non-reducing hydrogenase vhu is composed of four subunits; VhuA, VhuD, VhuG and VhuU. Ni(2+) serves as cofactor.

The sequence is that of F420-non-reducing hydrogenase vhu subunit U (vhuU) from Methanocaldococcus jannaschii (strain ATCC 43067 / DSM 2661 / JAL-1 / JCM 10045 / NBRC 100440) (Methanococcus jannaschii).